We begin with the raw amino-acid sequence, 229 residues long: Ferric nitrobindin-like protein (229 aa).

The interval 1-54 is disordered; the sequence is MSENSTPNNPVVPGAGADGPSLSDSASISGSDAVNLAAEQSKSTAHRNIPGLGD. A compositionally biased stretch (low complexity) spans 18-33; the sequence is DGPSLSDSASISGSDA. The short motif at 82-88 is the GXWXGXG element; that stretch reads GVWRGEG.

The protein belongs to the nitrobindin family.

This chain is Ferric nitrobindin-like protein, found in Corynebacterium glutamicum (strain R).